A 332-amino-acid chain; its full sequence is Ornithine carbamoyltransferase 1, catabolic (332 aa).

Residues 56–59 (STRT), Q83, R107, and 134–137 (HPTQ) each bind carbamoyl phosphate. L-ornithine is bound by residues N167, D231, and 235-236 (SM). Carbamoyl phosphate contacts are provided by residues 273–274 (CL) and R318.

Belongs to the aspartate/ornithine carbamoyltransferase superfamily. OTCase family.

It localises to the cytoplasm. It catalyses the reaction carbamoyl phosphate + L-ornithine = L-citrulline + phosphate + H(+). The protein operates within amino-acid degradation; L-arginine degradation via ADI pathway; carbamoyl phosphate from L-arginine: step 2/2. Its function is as follows. Reversibly catalyzes the transfer of the carbamoyl group from carbamoyl phosphate (CP) to the N(epsilon) atom of ornithine (ORN) to produce L-citrulline. This chain is Ornithine carbamoyltransferase 1, catabolic (arcB1), found in Streptococcus agalactiae serotype III (strain NEM316).